Consider the following 333-residue polypeptide: 4-hydroxyproline epimerase (333 aa).

The active-site Proton acceptor is the Cys90. Substrate contacts are provided by residues 91 to 92 and Asp249; that span reads GH. Cys253 serves as the catalytic Proton donor. A substrate-binding site is contributed by 254-255; the sequence is GT.

It belongs to the proline racemase family. Homodimer.

The catalysed reaction is trans-4-hydroxy-L-proline = cis-4-hydroxy-D-proline. Functionally, allows intracellular utilization of 4-hydroxyproline, one of the major constituents of host collagen, by converting 4-hydroxy-L-proline to 4-hydroxy-D-proline, which can be further metabolized by intracellular 4-hydroxy-D-proline oxidases. Strong B-cell mitogen. Plays an important role in the regulation of intra- and extracellular amino acid pools, allowing the bacterium to profit from host precursors and enzymatic pathways. In Brucella canis (strain ATCC 23365 / NCTC 10854 / RM-666), this protein is 4-hydroxyproline epimerase.